Reading from the N-terminus, the 88-residue chain is MAHKKGTGSTRNGRDSNSKRLGVKAYGGETVTAGSILIRQRGTSVLPGVNVGQGKDDTLFALTDGVVTFESIRRSLRNRKRISVVASS.

The segment at 1 to 24 is disordered; sequence MAHKKGTGSTRNGRDSNSKRLGVK.

Belongs to the bacterial ribosomal protein bL27 family.

This is Large ribosomal subunit protein bL27 from Prochlorococcus marinus (strain MIT 9303).